The sequence spans 224 residues: Response regulator protein GraR (224 aa).

The Response regulatory domain occupies Gln2–Tyr115. Position 51 is a 4-aspartylphosphate (Asp51). Residues Lys126 to Glu224 constitute a DNA-binding region (ompR/PhoB-type). Thr128, Thr130, and Thr149 each carry phosphothreonine.

As to quaternary structure, interacts with GraX. Post-translationally, phosphorylated by GraS. Phosphorylated by Stk1; phosphorylation increases the DNA-binding activity of GraR.

It localises to the cytoplasm. In terms of biological role, member of the two-component regulatory system GraR/GraS involved in resistance against cationic antimicrobial peptides (CAMPs). Upon phosphorylation by GraS, functions as a transcription regulator by direct binding to promoter regions of target genes such as adhesins, exoproteins, transporters, toxins, and proteins involved in cell wall synthesis. Down-regulates the expression of many genes involved in RNA and amino acid synthesis or glycolysis. The protein is Response regulator protein GraR (graR) of Staphylococcus aureus (strain Mu3 / ATCC 700698).